A 300-amino-acid chain; its full sequence is Delta(7)-sterol 5(6)-desaturase erg31 (300 aa).

The next 3 membrane-spanning stretches (helical) occupy residues 33 to 53, 78 to 98, and 117 to 137; these read ISLF…FASL, VLTA…WFLA, and YFLC…YWAH. One can recognise a Fatty acid hydroxylase domain in the interval 123–248; sequence PLFVMFSDFG…FTTLFDRLGN (126 aa). The Histidine box-1 signature appears at 137–141; the sequence is HRFLH. The Histidine box-2 signature appears at 150–154; the sequence is HKLHH. Residues 180 to 200 form a helical membrane-spanning segment; it reads HLFPFFFPLHKLTYLALFTFV. A Histidine box-3 motif is present at residues 225–229; it reads HNGHH.

The protein belongs to the sterol desaturase family. Requires Fe cation as cofactor.

The protein localises to the endoplasmic reticulum membrane. The enzyme catalyses episterol + 2 Fe(II)-[cytochrome b5] + O2 + 2 H(+) = 5-dehydroepisterol + 2 Fe(III)-[cytochrome b5] + 2 H2O. It participates in steroid metabolism; ergosterol biosynthesis. C-5 sterol desaturase; part of the third module of ergosterol biosynthesis pathway that includes by the late steps of the pathway. Erg31 and erg32 catalyze the introduction of a C-5 double bond in the B ring to produce 5-dehydroepisterol. The third module or late pathway involves the ergosterol synthesis itself through consecutive reactions that mainly occur in the endoplasmic reticulum (ER) membrane. Firstly, the squalene synthase erg9 catalyzes the condensation of 2 farnesyl pyrophosphate moieties to form squalene, which is the precursor of all steroids. Secondly, squalene is converted into lanosterol by the consecutive action of the squalene epoxidase erg1 and the lanosterol synthase erg7. The lanosterol 14-alpha-demethylase erg11/cyp1 catalyzes C14-demethylation of lanosterol to produce 4,4'-dimethyl cholesta-8,14,24-triene-3-beta-ol. In the next steps, a complex process involving various demethylation, reduction and desaturation reactions catalyzed by the C-14 reductase erg24 and the C-4 demethylation complex erg25-erg26-erg27 leads to the production of zymosterol. Erg28 likely functions in the C-4 demethylation complex reaction by tethering erg26 and Erg27 to the endoplasmic reticulum or to facilitate interaction between these proteins. Then, the sterol 24-C-methyltransferase erg6 catalyzes the methyl transfer from S-adenosyl-methionine to the C-24 of zymosterol to form fecosterol. The C-8 sterol isomerase erg2 catalyzes the reaction which results in unsaturation at C-7 in the B ring of sterols and thus converts fecosterol to episterol. The sterol-C5-desaturases erg31 and erg32 then catalyze the introduction of a C-5 double bond in the B ring to produce 5-dehydroepisterol. The C-22 sterol desaturase erg5 further converts 5-dehydroepisterol into ergosta-5,7,22,24(28)-tetraen-3beta-ol by forming the C-22(23) double bond in the sterol side chain. Finally, ergosta-5,7,22,24(28)-tetraen-3beta-ol is substrate of the C-24(28) sterol reductase erg4 to produce ergosterol. In the genus Schizosaccharomyces, a second route exists between lanosterol and fecosterol, via the methylation of lanosterol to eburicol by erg6, followed by C14-demethylation by erg11/cyp1 and C4-demethylation by the demethylation complex erg25-erg26-erg27. In Schizosaccharomyces pombe (strain 972 / ATCC 24843) (Fission yeast), this protein is Delta(7)-sterol 5(6)-desaturase erg31.